A 163-amino-acid chain; its full sequence is Nucleotide-binding protein PC1_1036 (163 aa).

This sequence belongs to the YajQ family.

In terms of biological role, nucleotide-binding protein. This is Nucleotide-binding protein PC1_1036 from Pectobacterium carotovorum subsp. carotovorum (strain PC1).